The sequence spans 346 residues: Uroporphyrinogen decarboxylase (346 aa).

Substrate is bound by residues 21–25, Phe40, Asp71, Tyr146, Ser201, and His316; that span reads RQAGR.

The protein belongs to the uroporphyrinogen decarboxylase family. As to quaternary structure, homodimer.

The protein resides in the cytoplasm. It catalyses the reaction uroporphyrinogen III + 4 H(+) = coproporphyrinogen III + 4 CO2. Its pathway is porphyrin-containing compound metabolism; protoporphyrin-IX biosynthesis; coproporphyrinogen-III from 5-aminolevulinate: step 4/4. Its function is as follows. Catalyzes the decarboxylation of four acetate groups of uroporphyrinogen-III to yield coproporphyrinogen-III. The chain is Uroporphyrinogen decarboxylase from Rickettsia conorii (strain ATCC VR-613 / Malish 7).